A 1460-amino-acid polypeptide reads, in one-letter code: Collagen alpha-1(I) chain (1460 aa).

The signal sequence occupies residues 1–22 (MFSFVDLRLLLLLAATALLTHG). Positions 23–157 (QEEGQEEDIP…PPGLGGNFAP (135 aa)) are cleaved as a propeptide — N-terminal propeptide. A VWFC domain is found at 34–92 (VTCVQNGLRYYDRDVWKPEACRICVCDNGNVLCDDVICDETKNCPGAQVPPGECCPVCP). The tract at residues 96-1213 (ASPTDQETTG…KAHDGGRYYR (1118 aa)) is disordered. Over residues 134–149 (PGLPGPPGPPGPPGPP) the composition is skewed to pro residues. The tract at residues 158–174 (QMSYGYDEKSTGGISVP) is nonhelical region (N-terminal). Lys-166 is modified (allysine). A Phosphoserine modification is found at Ser-167. A triple-helical region region spans residues 175–1188 (GPMGPSGPRG…PGPPGPPGPP (1014 aa)). A 4-hydroxyproline mark is found at Pro-186, Pro-189, Pro-192, Pro-201, Pro-204, Pro-207, Pro-222, Pro-237, Pro-243, Pro-252, and Pro-258. A compositionally biased stretch (low complexity) spans 194–213 (PQGFQGPPGEPGEPGASGPM). A compositionally biased stretch (basic and acidic residues) spans 225–239 (NGDDGEAGKPGRPGE). Lys-261 carries the post-translational modification 5-hydroxylysine; alternate. A glycan (O-linked (Gal...) hydroxylysine; alternate) is linked at Lys-261. Ser-267 bears the Phosphoserine mark. Low complexity predominate over residues 275–291 (DAGPAGPKGEPGSPGEN). 5 positions are modified to 4-hydroxyproline: Pro-285, Pro-288, Pro-294, Pro-303, and Pro-309. The segment covering 314–327 (PAGARGNDGATGAA) has biased composition (low complexity). Pro residues predominate over residues 329–341 (PPGPTGPAGPPGF). Pro-330, Pro-339, Pro-342, Pro-369, Pro-372, Pro-384, Pro-390, Pro-399, Pro-405, Pro-408, and Pro-423 each carry 4-hydroxyproline. A compositionally biased stretch (low complexity) spans 375 to 414 (AGAAGPAGNPGADGQPGAKGANGAPGIAGAPGFPGARGPS). Lys-426 is modified (5-hydroxylysine). Residues Pro-432, Pro-435, Pro-447, Pro-456, Pro-471, Pro-477, Pro-486, and Pro-492 each carry the 4-hydroxyproline modification. Gly residues predominate over residues 481–490 (GERGGPGSRG). The residue at position 501 (Lys-501) is a 5-hydroxylysine. 4-hydroxyproline occurs at positions 510, 519, 525, 531, 540, 543, 552, 561, 567, 579, 588, 597, 600, 618, 636, 642, 648, 654, 660, 666, 678, 687, 699, 711, 714, 720, 726, and 735. Over residues 534–560 (KGLTGSPGSPGPDGKTGPPGPAGQDGR) the composition is skewed to low complexity. The segment covering 569–588 (ARGQAGVMGFPGPKGAAGEP) has biased composition (low complexity). The span at 630-657 (QGPAGSPGFQGLPGPAGPPGEAGKPGEQ) shows a compositional bias: low complexity. Positions 692-720 (PRGANGAPGNDGAKGDAGAPGAPGSQGAP) are enriched in low complexity. Positions 741 to 743 (RGD) match the Cell attachment site motif. 5-hydroxylysine is present on Lys-747. A 4-hydroxyproline mark is found at Pro-753, Pro-768, and Pro-774. Residues 780–794 (AGPSGPAGPTGARGA) are compositionally biased toward low complexity. Ser-783 is subject to Phosphoserine. 4-hydroxyproline occurs at positions 795, 801, 804, 813, 819, 837, 846, and 855. Over residues 807–834 (AGFAGPPGADGQPGAKGEPGDAGAKGDA) the composition is skewed to low complexity. Over residues 836-848 (PPGPAGPTGPPGP) the composition is skewed to pro residues. Lys-858 carries the post-translational modification 5-hydroxylysine. Residues 863 to 879 (SAGPPGATGFPGAAGRV) are compositionally biased toward low complexity. 4-hydroxyproline occurs at positions 867 and 873. Residue Pro-881 is modified to 3-hydroxyproline. 16 positions are modified to 4-hydroxyproline: Pro-882, Pro-891, Pro-894, Pro-915, Pro-924, Pro-933, Pro-942, Pro-960, Pro-969, Pro-972, Pro-978, Pro-993, Pro-999, Pro-1005, Pro-1014, and Pro-1020. Low complexity predominate over residues 908-917 (ETGPAGRPGE). Low complexity predominate over residues 927–951 (AGEKGSPGADGPAGAPGTPGPQGIA). Pro residues predominate over residues 992 to 1002 (PPGPMGPPGLA). Positions 1004-1019 (PPGESGREGSPGAEGS) are enriched in low complexity. The residue at position 1029 (Lys-1029) is a 5-hydroxylysine. Residues 1038–1053 (AGPPGAPGAPGAPGPV) are compositionally biased toward pro residues. 3 positions are modified to 4-hydroxyproline: Pro-1041, Pro-1044, and Pro-1047. Over residues 1074-1088 (IGPVGARGPAGPQGP) the composition is skewed to low complexity. A Cell attachment site motif is present at residues 1089 to 1091 (RGD). The span at 1089–1103 (RGDKGETGEQGDRGI) shows a compositional bias: basic and acidic residues. Lys-1092 is modified (5-hydroxylysine). The residue at position 1104 (Lys-1104) is a 5-hydroxylysine; alternate. The O-linked (Gal...) hydroxylysine; alternate glycan is linked to Lys-1104. 4-hydroxyproline occurs at positions 1116, 1119, 1122, 1140, and 1155. Residues 1122–1155 (PGEQGPSGASGPAGPRGPPGSAGSPGKDGLNGLP) are compositionally biased toward low complexity. Pro-1160 carries the 3-hydroxyproline modification. The residue at position 1161 (Pro-1161) is a 4-hydroxyproline. Positions 1173-1188 (VGPPGPPGPPGPPGPP) are enriched in pro residues. Pro-1175 carries the 3-hydroxyproline modification. 4-hydroxyproline is present on Pro-1176. Residue Pro-1178 is modified to 3-hydroxyproline. Pro-1179 carries the post-translational modification 4-hydroxyproline. Pro-1181 carries the 3-hydroxyproline modification. A 4-hydroxyproline mark is found at Pro-1182, Pro-1185, and Pro-1188. Residues 1189–1214 (SGGFDFSFLPQPPQEKAHDGGRYYRA) form a nonhelical region (C-terminal) region. The span at 1203-1213 (EKAHDGGRYYR) shows a compositional bias: basic and acidic residues. Lys-1204 is subject to Allysine. Residues 1215 to 1460 (DDANVVRDRD…GMDIGPVCFL (246 aa)) constitute a propeptide, C-terminal propeptide. In terms of domain architecture, Fibrillar collagen NC1 spans 1225 to 1460 (LEVDTTLKSL…GMDIGPVCFL (236 aa)). Intrachain disulfides connect Cys-1255-Cys-1287, Cys-1295-Cys-1458, and Cys-1366-Cys-1411. Asp-1273, Asn-1275, Gln-1276, Cys-1278, and Asp-1281 together coordinate Ca(2+). An N-linked (GlcNAc...) asparagine glycan is attached at Asn-1361.

The protein belongs to the fibrillar collagen family. As to quaternary structure, trimers of one alpha 2(I) and two alpha 1(I) chains. Interacts with MRC2. Interacts with TRAM2. Interacts with MFAP4 in a Ca (2+)-dependent manner. Post-translationally, contains mostly 4-hydroxyproline. Proline residues at the third position of the tripeptide repeating unit (G-X-Y) are hydroxylated in some or all of the chains. Contains 3-hydroxyproline at a few sites. This modification occurs on the first proline residue in the sequence motif Gly-Pro-Hyp, where Hyp is 4-hydroxyproline. In terms of processing, lysine residues at the third position of the tripeptide repeating unit (G-X-Y) are 5-hydroxylated in some or all of the chains. Post-translationally, O-glycosylated on hydroxylated lysine residues. The O-linked glycan consists of a Glc-Gal disaccharide.

It localises to the secreted. The protein resides in the extracellular space. The protein localises to the extracellular matrix. Its function is as follows. Type I collagen is a member of group I collagen (fibrillar forming collagen). This is Collagen alpha-1(I) chain (COL1A1) from Canis lupus familiaris (Dog).